Reading from the N-terminus, the 325-residue chain is RepFIB replication protein A (325 aa).

The segment at 279–298 is disordered; that stretch reads APNDESKENPLPPSPAEKVS.

The protein belongs to the initiator RepB protein family.

Functionally, this protein is essential for plasmid replication; it is involved in copy control functions. In vitro, binds to the DNA repeat units, BCDD'D'', EFG and HIJ. The chain is RepFIB replication protein A (repA) from Escherichia coli.